The sequence spans 833 residues: A disintegrin and metalloproteinase with thrombospondin motifs 4 (833 aa).

The N-terminal stretch at M1–P49 is a signal peptide. Residues L50–R208 constitute a propeptide that is removed on maturation. N63 is a glycosylation site (N-linked (GlcNAc...) asparagine). The disordered stretch occupies residues K180–R204. Positions P188–P195 match the Cysteine switch motif. C190 is a binding site for Zn(2+). In terms of domain architecture, Peptidase M12B spans R214–P424. 11 disulfide bridges follow: C289–C341, C318–C323, C335–C419, C373–C403, C445–C468, C456–C478, C463–C497, C491–C502, C528–C565, C532–C570, and C543–C555. Residue N299 is glycosylated (N-linked (GlcNAc...) asparagine). Zn(2+) is bound at residue H357. Residue E358 is part of the active site. Zn(2+) is bound by residues H361 and H367. The region spanning T433–Q515 is the Disintegrin domain. The TSP type-1 domain occupies A516–P571. Residues S682–K833 are spacer.

Interacts with SRPX2. Zn(2+) is required as a cofactor. In terms of processing, the precursor is cleaved by a furin endopeptidase. Glycosylated. Can be O-fucosylated by POFUT2 on a serine or a threonine residue found within the consensus sequence C1-X(2)-(S/T)-C2-G of the TSP type-1 repeat domains where C1 and C2 are the first and second cysteine residue of the repeat, respectively. Fucosylated repeats can then be further glycosylated by the addition of a beta-1,3-glucose residue by the glucosyltransferase, B3GALTL. Fucosylation mediates the efficient secretion of ADAMTS family members. Can also be C-glycosylated with one or two mannose molecules on tryptophan residues within the consensus sequence W-X-X-W of the TPRs, and N-glycosylated. These other glycosylations can also facilitate secretion.

The protein localises to the secreted. The protein resides in the extracellular space. It is found in the extracellular matrix. It carries out the reaction Glutamyl endopeptidase. Bonds cleaved include 370-Thr-Glu-Gly-Glu-|-Ala-Arg-Gly-Ser-377 in the interglobular domain of mammalian aggrecan.. Cleaves aggrecan, a cartilage proteoglycan, at the '392-Glu-|-Ala-393' site and may be involved in its turnover. Also cleaves COMP. May play an important role in the destruction of aggrecan in arthritic diseases. This chain is A disintegrin and metalloproteinase with thrombospondin motifs 4 (Adamts4), found in Mus musculus (Mouse).